The sequence spans 256 residues: Isoprenyl transferase (256 aa).

Residue aspartate 33 is part of the active site. Aspartate 33 contacts Mg(2+). Substrate contacts are provided by residues 34–37, tryptophan 38, arginine 46, histidine 50, and 78–80; these read GNGR and STE. Asparagine 81 acts as the Proton acceptor in catalysis. Substrate-binding positions include tryptophan 82, arginine 84, arginine 201, and 207-209; that span reads RIS. Glutamate 220 serves as a coordination point for Mg(2+).

It belongs to the UPP synthase family. In terms of assembly, homodimer. It depends on Mg(2+) as a cofactor.

Its function is as follows. Catalyzes the condensation of isopentenyl diphosphate (IPP) with allylic pyrophosphates generating different type of terpenoids. The chain is Isoprenyl transferase from Staphylococcus aureus (strain COL).